A 634-amino-acid chain; its full sequence is Ras and EF-hand domain-containing protein homolog (634 aa).

2 consecutive EF-hand domains span residues 5-33 (EVENLFSLCDSESKGYLTMEDLRKVCPQL) and 33-68 (LDDNDLRFIFTELDQDGSGKIEKLEFLRGFQDTVQH). Ca(2+) contacts are provided by Asp-46, Asp-48, Ser-50, Lys-52, and Glu-57. Residues 169–310 (LSEKKHENER…RCEFDQKQDE (142 aa)) adopt a coiled-coil conformation. The disordered stretch occupies residues 212–234 (ARQEERDRLTKEKEEMRQRMSDE). Residues 449 to 454 (AVGKSS), 552 to 555 (NKVD), and 585 to 586 (AL) contribute to the GTP site. Residues 632-634 (RGS) constitute a propeptide, removed in mature form.

Belongs to the small GTPase superfamily. Rab family. Homodimer.

The protein resides in the cytoplasm. It localises to the perinuclear region. In terms of biological role, binds GTP and GDP. Plays a role in uterine seam cell development. This chain is Ras and EF-hand domain-containing protein homolog, found in Caenorhabditis elegans.